Reading from the N-terminus, the 219-residue chain is Large ribosomal subunit protein uL3 (219 aa).

Residues 136-156 (GASHGAHRNHRKPGSIGGCAT) form a disordered region.

The protein belongs to the universal ribosomal protein uL3 family. As to quaternary structure, part of the 50S ribosomal subunit. Forms a cluster with proteins L14 and L19.

Its function is as follows. One of the primary rRNA binding proteins, it binds directly near the 3'-end of the 23S rRNA, where it nucleates assembly of the 50S subunit. The protein is Large ribosomal subunit protein uL3 of Kineococcus radiotolerans (strain ATCC BAA-149 / DSM 14245 / SRS30216).